Consider the following 188-residue polypeptide: Nicotinamide/nicotinic acid mononucleotide adenylyltransferase (188 aa).

This sequence belongs to the archaeal NMN adenylyltransferase family.

The enzyme catalyses beta-nicotinamide D-ribonucleotide + ATP + H(+) = diphosphate + NAD(+). The catalysed reaction is nicotinate beta-D-ribonucleotide + ATP + H(+) = deamido-NAD(+) + diphosphate. It functions in the pathway cofactor biosynthesis; NAD(+) biosynthesis; NAD(+) from nicotinamide D-ribonucleotide: step 1/1. The protein operates within cofactor biosynthesis; NAD(+) biosynthesis; deamido-NAD(+) from nicotinate D-ribonucleotide: step 1/1. Its function is as follows. Dual substrate specificity enzyme that catalyzes the formation of NAD(+) from nicotinamide mononucleotide (NMN) and the formation of deamido-NAD(+) (NaAD) from nicotinate mononucleotide (NaMN). Shows nearly identical catalytic efficiency for both physiological substrates. Plays an essential role in all three routes of NAD biogenesis, de novo synthesis as well as the deamidating and nondeamidating salvage pathways. The protein is Nicotinamide/nicotinic acid mononucleotide adenylyltransferase of Acinetobacter baylyi (strain ATCC 33305 / BD413 / ADP1).